A 196-amino-acid chain; its full sequence is Imidazoleglycerol-phosphate dehydratase (196 aa).

It belongs to the imidazoleglycerol-phosphate dehydratase family.

Its subcellular location is the cytoplasm. The catalysed reaction is D-erythro-1-(imidazol-4-yl)glycerol 3-phosphate = 3-(imidazol-4-yl)-2-oxopropyl phosphate + H2O. Its pathway is amino-acid biosynthesis; L-histidine biosynthesis; L-histidine from 5-phospho-alpha-D-ribose 1-diphosphate: step 6/9. This chain is Imidazoleglycerol-phosphate dehydratase, found in Phenylobacterium zucineum (strain HLK1).